The following is a 310-amino-acid chain: 2-methoxy-6-polyprenyl-1,4-benzoquinol methylase, mitochondrial (310 aa).

A mitochondrion-targeting transit peptide spans 1–6 (MAHMRS). S-adenosyl-L-methionine is bound by residues Thr99, Asp154, and 182 to 183 (DA).

Belongs to the class I-like SAM-binding methyltransferase superfamily. MenG/UbiE family. Component of a multi-subunit COQ enzyme complex, composed of at least coq3, coq4, coq5, coq6, coq7 and coq9.

The protein resides in the mitochondrion inner membrane. It carries out the reaction a 2-methoxy-6-(all-trans-polyprenyl)benzene-1,4-diol + S-adenosyl-L-methionine = a 5-methoxy-2-methyl-3-(all-trans-polyprenyl)benzene-1,4-diol + S-adenosyl-L-homocysteine + H(+). It participates in cofactor biosynthesis; ubiquinone biosynthesis. In terms of biological role, methyltransferase required for the conversion of 2-polyprenyl-6-methoxy-1,4-benzoquinol (DDMQH2) to 2-polyprenyl-3-methyl-6-methoxy-1,4-benzoquinol (DMQH2). This chain is 2-methoxy-6-polyprenyl-1,4-benzoquinol methylase, mitochondrial, found in Xenopus laevis (African clawed frog).